We begin with the raw amino-acid sequence, 90 residues long: Carboxysome shell vertex protein CsoS4A (90 aa).

The region spanning 1–78 is the BMV domain; the sequence is MKIYKVDKTL…SDLTIVGIID (78 aa).

The protein belongs to the CcmL/EutN family. CsoS4 subfamily. In terms of assembly, homopentamer.

It localises to the carboxysome. In terms of biological role, probably forms vertices in the carboxysome, a polyhedral inclusion where RuBisCO (ribulose bisphosphate carboxylase, cbbL-cbbS) is sequestered. Has been modeled to induce curvature upon insertion into an otherwise flat hexagonal layer of major carboxysome subunits. The protein is Carboxysome shell vertex protein CsoS4A of Hydrogenovibrio crunogenus (strain DSM 25203 / XCL-2) (Thiomicrospira crunogena).